The primary structure comprises 70 residues: MKSQTFFLLFLVVLLLAISQSEAFIGAVAGLLSKIFGKRSMRDMDTMKYLYDPSLSAADLKTLQKLMENY.

The first 23 residues, 1 to 23 (MKSQTFFLLFLVVLLLAISQSEA), serve as a signal peptide directing secretion. The residue at position 36 (F36) is a Phenylalanine amide. Residues 40–70 (SMRDMDTMKYLYDPSLSAADLKTLQKLMENY) constitute a propeptide that is removed on maturation.

The protein belongs to the non-disulfide-bridged peptide (NDBP) superfamily. Short antimicrobial peptide (group 4) family. In terms of tissue distribution, expressed by the venom gland.

Its subcellular location is the secreted. It localises to the target cell membrane. In terms of biological role, antibacterial peptide. The protein is Peptide BmKn1 of Olivierus martensii (Manchurian scorpion).